A 290-amino-acid polypeptide reads, in one-letter code: 4-hydroxybenzoate octaprenyltransferase (290 aa).

6 consecutive transmembrane segments (helical) span residues 38–58, 99–119, 141–161, 213–233, 238–258, and 268–288; these read LAGMAIPALGTLTVFILGVFF, LFGALVGISFALVLTLNSMTI, LPQLVLGAAFGWSIPMVFTAV, LIIGLLQLATLLLLGVIGWQL, IYYLALAGAAGLFLWQQKLIV, and AFLNNNLVGMLIFVGILLSLL.

Belongs to the UbiA prenyltransferase family. Requires Mg(2+) as cofactor.

It is found in the cell inner membrane. The enzyme catalyses all-trans-octaprenyl diphosphate + 4-hydroxybenzoate = 4-hydroxy-3-(all-trans-octaprenyl)benzoate + diphosphate. It functions in the pathway cofactor biosynthesis; ubiquinone biosynthesis. Functionally, catalyzes the prenylation of para-hydroxybenzoate (PHB) with an all-trans polyprenyl group. Mediates the second step in the final reaction sequence of ubiquinone-8 (UQ-8) biosynthesis, which is the condensation of the polyisoprenoid side chain with PHB, generating the first membrane-bound Q intermediate 3-octaprenyl-4-hydroxybenzoate. This chain is 4-hydroxybenzoate octaprenyltransferase, found in Sodalis glossinidius (strain morsitans).